Consider the following 753-residue polypeptide: Pumilio homolog 23 (753 aa).

The interval 1–84 is disordered; the sequence is MVSVGSKSLP…SEFEHQNQFV (84 aa). 3 stretches are compositionally biased toward basic and acidic residues: residues 23–38, 47–57, and 73–84; these read MGERGKSSNNHSERNK, GNRGFDVDSSK, and KHSEFEHQNQFV. 8 Pumilio repeats span residues 123-158, 159-198, 206-244, 284-325, 345-380, 381-418, 526-563, and 564-599; these read ETRGREYEIATDYIISHVLQTLLEGCELDQLCSFIR, NSASVFPAIAMDRSGSHVAESALKSLATHLENPDAYSVIE, KVIVDNPLDMMCNCYGSHVLRRLLCLCKGVSLDSPELYG, GLLS…EIIP, NVAKEILESMKDNSFSHLVEVILEVAPESLYNEMFN, KVFKNSLFELSVDRCANFVIQALISHARDQEQMGIMWE, SMKAEYITETAKDSSGARVIEAFLASDAATKQKRRLII, and KLRGHFGELSLHTSGSFTVEKCFDACNLTLREAIAS. The region spanning 322-675 is the PUM-HD domain; that stretch reads EIIPLILRCN…DASEDAAQEI (354 aa). Basic and acidic residues-rich tracts occupy residues 677–688, 699–712, and 719–728; these read VKNTRKEIDHHP, HAKDKDEPFAGEKR, and KTSEATDKPK. Residues 677-753 are disordered; sequence VKNTRKEIDH…KNRHSNKMRI (77 aa). Residues 744–753 are compositionally biased toward basic residues; sequence KNRHSNKMRI.

The protein localises to the nucleus. It localises to the nucleolus. Functionally, sequence-specific RNA-binding protein that regulates translation and mRNA stability by binding the 3'-UTR of target mRNAs. The protein is Pumilio homolog 23 (APUM23) of Arabidopsis thaliana (Mouse-ear cress).